Consider the following 1393-residue polypeptide: DNA-directed RNA polymerase subunit beta' (1393 aa).

Zn(2+) contacts are provided by C72, C74, C87, and C90. 3 residues coordinate Mg(2+): D463, D465, and D467. Zn(2+)-binding residues include C812, C887, C894, and C897.

The protein belongs to the RNA polymerase beta' chain family. In terms of assembly, the RNAP catalytic core consists of 2 alpha, 1 beta, 1 beta' and 1 omega subunit. When a sigma factor is associated with the core the holoenzyme is formed, which can initiate transcription. Mg(2+) serves as cofactor. It depends on Zn(2+) as a cofactor.

It catalyses the reaction RNA(n) + a ribonucleoside 5'-triphosphate = RNA(n+1) + diphosphate. In terms of biological role, DNA-dependent RNA polymerase catalyzes the transcription of DNA into RNA using the four ribonucleoside triphosphates as substrates. The sequence is that of DNA-directed RNA polymerase subunit beta' from Chlamydia felis (strain Fe/C-56) (Chlamydophila felis).